Here is a 122-residue protein sequence, read N- to C-terminus: Large ribosomal subunit protein uL14c (122 aa).

This sequence belongs to the universal ribosomal protein uL14 family. In terms of assembly, part of the 50S ribosomal subunit.

The protein resides in the plastid. The protein localises to the chloroplast. In terms of biological role, binds to 23S rRNA. In Piper cenocladum (Ant piper), this protein is Large ribosomal subunit protein uL14c.